Reading from the N-terminus, the 96-residue chain is DNA-directed RNA polymerase subunit Rpo11 (96 aa).

Belongs to the archaeal Rpo11/eukaryotic RPB11/RPC19 RNA polymerase subunit family. Part of the RNA polymerase complex.

It is found in the cytoplasm. The catalysed reaction is RNA(n) + a ribonucleoside 5'-triphosphate = RNA(n+1) + diphosphate. Functionally, DNA-dependent RNA polymerase (RNAP) catalyzes the transcription of DNA into RNA using the four ribonucleoside triphosphates as substrates. In Haloquadratum walsbyi (strain DSM 16790 / HBSQ001), this protein is DNA-directed RNA polymerase subunit Rpo11.